Reading from the N-terminus, the 328-residue chain is D-cysteine desulfhydrase (328 aa).

Lys-51 bears the N6-(pyridoxal phosphate)lysine mark.

This sequence belongs to the ACC deaminase/D-cysteine desulfhydrase family. In terms of assembly, homodimer. Pyridoxal 5'-phosphate serves as cofactor.

It carries out the reaction D-cysteine + H2O = hydrogen sulfide + pyruvate + NH4(+) + H(+). Catalyzes the alpha,beta-elimination reaction of D-cysteine and of several D-cysteine derivatives. It could be a defense mechanism against D-cysteine. This Escherichia coli (strain UTI89 / UPEC) protein is D-cysteine desulfhydrase.